The sequence spans 549 residues: ATP synthase subunit alpha (549 aa).

172–179 lines the ATP pocket; sequence GDRKTGKT. The segment at 513–549 is disordered; the sequence is SSTGESVVPDEHVEAMDEEDLGKESVKVKKPAPQKKK. Residues 540–549 show a composition bias toward basic residues; it reads VKKPAPQKKK.

This sequence belongs to the ATPase alpha/beta chains family. As to quaternary structure, F-type ATPases have 2 components, CF(1) - the catalytic core - and CF(0) - the membrane proton channel. CF(1) has five subunits: alpha(3), beta(3), gamma(1), delta(1), epsilon(1). CF(0) has three main subunits: a(1), b(2) and c(9-12). The alpha and beta chains form an alternating ring which encloses part of the gamma chain. CF(1) is attached to CF(0) by a central stalk formed by the gamma and epsilon chains, while a peripheral stalk is formed by the delta and b chains.

The protein resides in the cell membrane. The catalysed reaction is ATP + H2O + 4 H(+)(in) = ADP + phosphate + 5 H(+)(out). Produces ATP from ADP in the presence of a proton gradient across the membrane. The alpha chain is a regulatory subunit. This Mycobacterium marinum (strain ATCC BAA-535 / M) protein is ATP synthase subunit alpha.